The following is a 401-amino-acid chain: 8-amino-7-oxononanoate synthase (401 aa).

Arginine 24 contacts substrate. 111–112 serves as a coordination point for pyridoxal 5'-phosphate; sequence GF. Histidine 137 contributes to the substrate binding site. Residues serine 183, histidine 211, and threonine 240 each contribute to the pyridoxal 5'-phosphate site. Position 243 is an N6-(pyridoxal phosphate)lysine (lysine 243). Threonine 357 serves as a coordination point for substrate.

This sequence belongs to the class-II pyridoxal-phosphate-dependent aminotransferase family. BioF subfamily. As to quaternary structure, homodimer. The cofactor is pyridoxal 5'-phosphate.

It carries out the reaction 6-carboxyhexanoyl-[ACP] + L-alanine + H(+) = (8S)-8-amino-7-oxononanoate + holo-[ACP] + CO2. The protein operates within cofactor biosynthesis; biotin biosynthesis. Its function is as follows. Catalyzes the decarboxylative condensation of pimeloyl-[acyl-carrier protein] and L-alanine to produce 8-amino-7-oxononanoate (AON), [acyl-carrier protein], and carbon dioxide. This is 8-amino-7-oxononanoate synthase from Xylella fastidiosa (strain M12).